The sequence spans 461 residues: Kynureninase (461 aa).

Pyridoxal 5'-phosphate-binding positions include L114, T115, 142–145, D228, H231, and Y253; that span reads FPSD. N6-(pyridoxal phosphate)lysine is present on K254. Pyridoxal 5'-phosphate contacts are provided by W288 and N316.

It belongs to the kynureninase family. In terms of assembly, homodimer. It depends on pyridoxal 5'-phosphate as a cofactor.

It is found in the cytoplasm. The enzyme catalyses L-kynurenine + H2O = anthranilate + L-alanine + H(+). It carries out the reaction 3-hydroxy-L-kynurenine + H2O = 3-hydroxyanthranilate + L-alanine + H(+). The protein operates within amino-acid degradation; L-kynurenine degradation; L-alanine and anthranilate from L-kynurenine: step 1/1. It functions in the pathway cofactor biosynthesis; NAD(+) biosynthesis; quinolinate from L-kynurenine: step 2/3. Functionally, catalyzes the cleavage of L-kynurenine (L-Kyn) and L-3-hydroxykynurenine (L-3OHKyn) into anthranilic acid (AA) and 3-hydroxyanthranilic acid (3-OHAA), respectively. The polypeptide is Kynureninase (Candida albicans (strain SC5314 / ATCC MYA-2876) (Yeast)).